Consider the following 479-residue polypeptide: Altronate oxidoreductase (479 aa).

Residue 18–29 (IIQFGEGNFLRA) coordinates NAD(+).

The protein belongs to the mannitol dehydrogenase family. UxaB subfamily.

The catalysed reaction is D-altronate + NAD(+) = keto-D-tagaturonate + NADH + H(+). The protein operates within carbohydrate metabolism; pentose and glucuronate interconversion. This Phocaeicola vulgatus (strain ATCC 8482 / DSM 1447 / JCM 5826 / CCUG 4940 / NBRC 14291 / NCTC 11154) (Bacteroides vulgatus) protein is Altronate oxidoreductase.